Here is a 184-residue protein sequence, read N- to C-terminus: Female-specific protein transformer (184 aa).

Basic and acidic residues-rich tracts occupy residues 1-39 and 49-58; these read MKMD…DSRK and DEVREQDRIR. Disordered regions lie at residues 1 to 123 and 146 to 184; these read MKMD…PKII and YQRL…RPPY. 2 stretches are compositionally biased toward basic residues: residues 59–75 and 84–114; these read SLRQ…RSRS and SRHR…RSPH. A compositionally biased stretch (pro residues) spans 150–159; it reads PRPPPFPPAP.

It is found in the nucleus speckle. Member of the regulatory pathway controlling female somatic sexual differentiation, regulated by Sxl. Activates dsx female-specific splicing by promoting the formation of a splicing enhancer complex which consists of tra, tra2 and sr proteins. The sequence is that of Female-specific protein transformer (tra) from Drosophila simulans (Fruit fly).